The sequence spans 508 residues: MSLADELLADLEEAGEEDGLYPGGEEGESDGEPGERQVDGGLEDIPEEMEVDYSSTESVTSIAKLRHSKPFAEIMDKISHYVGNQRKNSEVSGPVEADPEYRLIVAANNLTVEIDNELNIIHKFVRDKYSKRFPELESLVPNALDYIRTVKELGNNLEKCKNNETLQQILTNATIMVVSVTASTTQGTMLGDDELQRLEEACDMALELNQSKHRIYEYVESRMSFIAPNLSIIVGASTAAKIMGVAGGLTNLSKMPACNLMLLGAQRRTLSGFSSTSLLPHTGYIYHCDVVQTLPPDLRRKAARLVSAKCTLASRVDSFHESADGKVGYDLKEEIERKFDKWQEPPPVKQVKPLPAPLDGQRKKRGGRRYRKMKERLGLTEIRKHANRMTFAEIEDDAYQEDLGFSLGQLGKSGSGRVRQAQVNDSTKARISKSLQRTLQKQSMTYGGKSTVRDRSSGTSSSVAFTPLQGLEIVNPQAAEKKVAEANQKYFSNMAEFLKVKREKEDKV.

The interval 1–45 is disordered; sequence MSLADELLADLEEAGEEDGLYPGGEEGESDGEPGERQVDGGLEDI. Positions 7–32 are enriched in acidic residues; sequence LLADLEEAGEEDGLYPGGEEGESDGE. Coiled coils occupy residues 96–131 and 192–226; these read EADPEYRLIVAANNLTVEIDNELNIIHKFVRDKYSK and DDELQRLEEACDMALELNQSKHRIYEYVESRMSFI. Residues 226–344 form the Nop domain; that stretch reads IAPNLSIIVG…IERKFDKWQE (119 aa). Disordered stretches follow at residues 345 to 368 and 442 to 461; these read PPPVKQVKPLPAPLDGQRKKRGGR and QSMTYGGKSTVRDRSSGTSS. The Nuclear localization signal (NLS) signature appears at 362 to 375; the sequence is RKKRGGRRYRKMKE.

This sequence belongs to the PRP31 family. As to quaternary structure, identified in the spliceosome B complex. Component of the U4/U6-U5 tri-snRNP complex. Component of some MLL1/MLL complex.

It localises to the nucleus. It is found in the nucleus speckle. Its subcellular location is the cajal body. Involved in pre-mRNA splicing as component of the spliceosome. Required for the assembly of the U4/U5/U6 tri-snRNP complex, one of the building blocks of the spliceosome. The chain is U4/U6 small nuclear ribonucleoprotein Prp31 (prpf31) from Danio rerio (Zebrafish).